We begin with the raw amino-acid sequence, 149 residues long: uncharacterized protein (149 aa).

S21 carries the post-translational modification Phosphoserine. A run of 2 helical transmembrane segments spans residues 48–68 (FMEFAVGSIVYSFGVPGWVLG) and 72–92 (VLAAGFLVMFLFLVWPCFQLV). The disordered stretch occupies residues 116 to 149 (AEEVPPPSYPSLEEENEGNEEIEESEEMNTLLSK). Positions 127–142 (LEEENEGNEEIEESEE) are enriched in acidic residues.

It localises to the membrane. This is an uncharacterized protein from Schizosaccharomyces pombe (strain 972 / ATCC 24843) (Fission yeast).